The chain runs to 64 residues: Lantibiotic actagardine (64 aa).

A propeptide spanning residues Met1–Ala45 is cleaved from the precursor. The lanthionine (Ser-Cys) cross-link spans Ser46–Cys51. 2 cross-links (beta-methyllanthionine (Thr-Cys)) span residues Thr52–Cys57 and Thr54–Cys62. A cross-link (beta-methyllanthionine sulfoxide (Thr-Cys)) is located at residues Thr59–Cys64.

Belongs to the type B lantibiotic family. In terms of processing, maturation of lantibiotics involves the enzymatic conversion of Thr, and Ser into dehydrated AA by the enzyme garM and the formation of thioether bonds with cysteine. The 59-64 beta-methyllanthionine thioether bond is oxidized to a sulfoxide by the monooxygenase GarO. This is followed by membrane translocation and cleavage of the modified precursor. The sulfoxide group of the 59-64 beta-methyllanthionine thioether bond is mildly important for activity, since the antibacterial activity of deoxyactagardine is marginally lower compared with oxidized actagardine.

Has potent antibacterial activity against some Gram-positive bacteria. Has good antistreptococcal activity. Inhibits cell wall biosynthesis by binding to lipid II and blocking transglycosylation. This Actinoplanes garbadinensis protein is Lantibiotic actagardine.